Here is a 382-residue protein sequence, read N- to C-terminus: uncharacterized protein (382 aa).

A run of 12 helical transmembrane segments spans residues 14–34 (GLLL…LWLA), 45–65 (MVSS…GYLI), 75–95 (YLAS…VGFW), 102–122 (FIAG…LMCS), 131–151 (LLAA…LLVS), 157–177 (LLHV…PLLF), 204–224 (LGVN…GLMP), 231–251 (GMAN…GILG), 270–290 (VQVF…AMAP), 291–311 (ALFI…AWAC), 325–345 (ALLL…AMLM), and 349–369 (SDNL…LMLL).

Belongs to the major facilitator superfamily. YcaD (TC 2.A.1.26) family.

Its subcellular location is the cell inner membrane. This is an uncharacterized protein from Salmonella paratyphi A (strain ATCC 9150 / SARB42).